A 98-amino-acid polypeptide reads, in one-letter code: Integration host factor subunit alpha (98 aa).

Residues Asp-53–Glu-69 are compositionally biased toward basic and acidic residues. The disordered stretch occupies residues Asp-53–Pro-72.

This sequence belongs to the bacterial histone-like protein family. In terms of assembly, heterodimer of an alpha and a beta chain.

Its function is as follows. This protein is one of the two subunits of integration host factor, a specific DNA-binding protein that functions in genetic recombination as well as in transcriptional and translational control. This chain is Integration host factor subunit alpha, found in Vibrio atlanticus (strain LGP32) (Vibrio splendidus (strain Mel32)).